Here is a 570-residue protein sequence, read N- to C-terminus: Proline--tRNA ligase (570 aa).

It belongs to the class-II aminoacyl-tRNA synthetase family. ProS type 1 subfamily. Homodimer.

Its subcellular location is the cytoplasm. It carries out the reaction tRNA(Pro) + L-proline + ATP = L-prolyl-tRNA(Pro) + AMP + diphosphate. Catalyzes the attachment of proline to tRNA(Pro) in a two-step reaction: proline is first activated by ATP to form Pro-AMP and then transferred to the acceptor end of tRNA(Pro). As ProRS can inadvertently accommodate and process non-cognate amino acids such as alanine and cysteine, to avoid such errors it has two additional distinct editing activities against alanine. One activity is designated as 'pretransfer' editing and involves the tRNA(Pro)-independent hydrolysis of activated Ala-AMP. The other activity is designated 'posttransfer' editing and involves deacylation of mischarged Ala-tRNA(Pro). The misacylated Cys-tRNA(Pro) is not edited by ProRS. This chain is Proline--tRNA ligase, found in Neisseria meningitidis serogroup A / serotype 4A (strain DSM 15465 / Z2491).